The primary structure comprises 54 residues: Conotoxin vc5c (54 aa).

Positions 1–14 are cleaved as a signal peptide; the sequence is VILLLLIASIPSDA. The propeptide occupies 15 to 43; sequence VQLKTKDDMPLASFHGNARRTLQMLSNKR. Glu50 is modified (4-carboxyglutamate). The residue at position 51 (Trp51) is a 6'-bromotryptophan.

The protein belongs to the conotoxin T superfamily. Post-translationally, contains 2 disulfide bonds that can be either 'C1-C3, C2-C4' or 'C1-C4, C2-C3', since these disulfide connectivities have been observed for conotoxins with cysteine framework V (for examples, see AC P0DQQ7 and AC P81755). In terms of tissue distribution, expressed by the venom duct.

It localises to the secreted. The chain is Conotoxin vc5c from Conus victoriae (Queen Victoria cone).